The sequence spans 99 residues: Malonate decarboxylase acyl carrier protein (99 aa).

Serine 25 is subject to O-(phosphoribosyl dephospho-coenzyme A)serine.

This sequence belongs to the MdcC family. In terms of processing, covalently binds the prosthetic group of malonate decarboxylase.

The protein resides in the cytoplasm. Functionally, subunit of malonate decarboxylase, it is an acyl carrier protein to which acetyl and malonyl thioester residues are bound via a 2'-(5''-phosphoribosyl)-3'-dephospho-CoA prosthetic group and turn over during the catalytic mechanism. The protein is Malonate decarboxylase acyl carrier protein of Pseudomonas aeruginosa (strain LESB58).